We begin with the raw amino-acid sequence, 203 residues long: Secreted phosphoprotein 24 (203 aa).

An N-terminal signal peptide occupies residues 1 to 23 (MEKMVMKMLVIFVFGMNHWTCTG). 2 disulfides stabilise this stretch: C86-C97 and C110-C128. Phosphoserine is present on S90. A phosphoserine mark is found at S138, S139, S166, and S175. Residues 155-174 (NSHLLGLTPDRSRGEPLYER) are disordered. Basic and acidic residues predominate over residues 164–174 (DRSRGEPLYER).

Belongs to the SPP2 family. Post-translationally, multiply phosphorylated at serine residues. In terms of processing, phosphorylation sites are present in the extracellular medium.

The protein resides in the secreted. Functionally, could coordinate an aspect of bone turnover. The protein is Secreted phosphoprotein 24 (SPP2) of Ovis aries (Sheep).